Here is a 335-residue protein sequence, read N- to C-terminus: Tetraacyldisaccharide 4'-kinase (335 aa).

58–65 (TVGGSGKT) contacts ATP.

It belongs to the LpxK family.

The enzyme catalyses a lipid A disaccharide + ATP = a lipid IVA + ADP + H(+). It participates in glycolipid biosynthesis; lipid IV(A) biosynthesis; lipid IV(A) from (3R)-3-hydroxytetradecanoyl-[acyl-carrier-protein] and UDP-N-acetyl-alpha-D-glucosamine: step 6/6. Functionally, transfers the gamma-phosphate of ATP to the 4'-position of a tetraacyldisaccharide 1-phosphate intermediate (termed DS-1-P) to form tetraacyldisaccharide 1,4'-bis-phosphate (lipid IVA). The chain is Tetraacyldisaccharide 4'-kinase from Shewanella oneidensis (strain ATCC 700550 / JCM 31522 / CIP 106686 / LMG 19005 / NCIMB 14063 / MR-1).